A 704-amino-acid chain; its full sequence is Cystathionine beta-synthase cbs-1 (704 aa).

Residues N454, G562–T566, and S652 each bind pyridoxal 5'-phosphate.

This sequence belongs to the cysteine synthase/cystathionine beta-synthase family. As to quaternary structure, monomer. In terms of assembly, does not bind pyridoxal 5'-phosphate, PLP; which may explain why this isoform has virtually undetectable catalytic activity. It depends on pyridoxal 5'-phosphate as a cofactor.

Its subcellular location is the cytoplasm. The enzyme catalyses L-homocysteine + L-serine = L,L-cystathionine + H2O. Its pathway is amino-acid biosynthesis; L-cysteine biosynthesis; L-cysteine from L-homocysteine and L-serine: step 1/2. In terms of biological role, hydro-lyase catalyzing the first step of the transsulfuration pathway, where the hydroxyl group of L-serine is displaced by L-homocysteine in a beta-replacement reaction to form L-cystathionine, the precursor of L-cysteine. Plays a role in maintaining homocysteine homeostasis. Involved in cold-induced somatic longevity mediated by prostaglandin E2 (PGE2) signals from adult germ cells, perhaps acting via a role in the production of hydrogen sulfide (H2S). Required for normal development. This Caenorhabditis elegans protein is Cystathionine beta-synthase cbs-1.